An 89-amino-acid chain; its full sequence is Small ribosomal subunit protein uS14A (89 aa).

The protein belongs to the universal ribosomal protein uS14 family. As to quaternary structure, part of the 30S ribosomal subunit. Contacts proteins S3 and S10.

Binds 16S rRNA, required for the assembly of 30S particles and may also be responsible for determining the conformation of the 16S rRNA at the A site. The protein is Small ribosomal subunit protein uS14A of Lacticaseibacillus paracasei (strain ATCC 334 / BCRC 17002 / CCUG 31169 / CIP 107868 / KCTC 3260 / NRRL B-441) (Lactobacillus paracasei).